The sequence spans 231 residues: Orotidine 5'-phosphate decarboxylase (231 aa).

Substrate is bound by residues Asp-11, Lys-33, 60–69 (DLKLHDIPNT), Thr-117, Arg-179, Gln-187, Gly-207, and Arg-208. Catalysis depends on Lys-62, which acts as the Proton donor.

It belongs to the OMP decarboxylase family. Type 1 subfamily. In terms of assembly, homodimer.

The catalysed reaction is orotidine 5'-phosphate + H(+) = UMP + CO2. It participates in pyrimidine metabolism; UMP biosynthesis via de novo pathway; UMP from orotate: step 2/2. Catalyzes the decarboxylation of orotidine 5'-monophosphate (OMP) to uridine 5'-monophosphate (UMP). The polypeptide is Orotidine 5'-phosphate decarboxylase (Ehrlichia chaffeensis (strain ATCC CRL-10679 / Arkansas)).